We begin with the raw amino-acid sequence, 192 residues long: E3 ubiquitin-protein ligase RNF185 (192 aa).

Positions 1-13 (MASKGPSASASTE) are enriched in polar residues. Positions 1-30 (MASKGPSASASTENSNAGGPSGSSNGTGES) are disordered. Over 1–130 (MASKGPSASA…GGFQGFGFGD (130 aa)) the chain is Cytoplasmic. Residues 14 to 27 (NSNAGGPSGSSNGT) show a composition bias toward low complexity. The tract at residues 29-80 (ESGGQDSTFECNICLDTAKDAVISLCGHLFCWPCLHQWLETRPNRQVCPVCK) is required for ubiquitin ligase activity and protection against ER stress-induced cell death. Residues 39–80 (CNICLDTAKDAVISLCGHLFCWPCLHQWLETRPNRQVCPVCK) form an RING-type zinc finger. The segment at 90 to 123 (PLYGRGSTGQQDPREKTPPRPQGQRPEPENRGGF) is disordered. The helical transmembrane segment at 131–151 (GGFQMSFGIGAFPFGIFATAF) threads the bilayer. At 152-171 (NINDGRPPPAVPGTPQYVDE) the chain is on the mitochondrial intermembrane side. A helical membrane pass occupies residues 172–192 (QFLSRLFLFVALVIMFWLLIA).

Interacts with ATG5 and BNIP1. As to expression, ubiquitously expressed with high expression in testis.

It localises to the mitochondrion outer membrane. The protein resides in the endoplasmic reticulum membrane. The catalysed reaction is S-ubiquitinyl-[E2 ubiquitin-conjugating enzyme]-L-cysteine + [acceptor protein]-L-lysine = [E2 ubiquitin-conjugating enzyme]-L-cysteine + N(6)-ubiquitinyl-[acceptor protein]-L-lysine.. Its pathway is protein modification; protein ubiquitination. E3 ubiquitin-protein ligase that regulates selective mitochondrial autophagy by mediating 'Lys-63'-linked polyubiquitination of BNIP1. Acts in the endoplasmic reticulum (ER)-associated degradation (ERAD) pathway, which targets misfolded proteins that accumulate in the endoplasmic reticulum (ER) for ubiquitination and subsequent proteasome-mediated degradation. Protects cells from ER stress-induced apoptosis. Responsible for the cotranslational ubiquitination and degradation of CFTR in the ERAD pathway. Also acts as a regulator of the innate antiviral response by catalyzing 'Lys-27'-linked polyubiquitination of CGAS, thereby promoting CGAS cyclic GMP-AMP synthase activity. Preferentially associates with the E2 enzymes UBE2J1 and UBE2J2. The protein is E3 ubiquitin-protein ligase RNF185 (Rnf185) of Mus musculus (Mouse).